Here is a 448-residue protein sequence, read N- to C-terminus: MNAHEVNFDGLVGPTHNYGGLSYGNVASQSNSQAVSNPKEAAKQGLAKMKALMEMGFKQGVLAPQARPDTAALRSLGFSGSDEEVIRRAAKEAMPLLAACSSASSMWTANAATVSPSADTADGRVHFTAANLNCKFHRSIEHPTTSRVLAAMFNDERHFAHHAALPAVSQFGDEGAANHTRFCKDYGDAGVEFFVFGRSAFDSRFPAPQRYPARQTLEACQAVARLHGLSEAGVVYAQQNPAVIDQGVFHNDVISVGNGEVLFHHEDAFLDTEKVLAELHDKLGRRGGRFRAICVPRDQVAVEDAVKSYLFNSQLLSKADGSMLLVVPEECRNNPRVWNYLDQLTGDDGPIREVKVFDLKQSMQNGGGPACLRLRVALQERELAAVNPGVIMSAGLYDTLVAWVDRHYRDRLSETDLADPQLLLECRTALDELTQILKLGSVYSFQLD.

Substrate contacts are provided by residues 19–28, N110, and 137–138; these read GGLSYGNVAS and HR. E174 is an active-site residue. R214 contributes to the substrate binding site. Residue H250 is part of the active site. Substrate-binding residues include D252 and N365. C371 acts as the Nucleophile in catalysis.

Belongs to the succinylarginine dihydrolase family. As to quaternary structure, homodimer.

It carries out the reaction N(2)-succinyl-L-arginine + 2 H2O + 2 H(+) = N(2)-succinyl-L-ornithine + 2 NH4(+) + CO2. It participates in amino-acid degradation; L-arginine degradation via AST pathway; L-glutamate and succinate from L-arginine: step 2/5. In terms of biological role, catalyzes the hydrolysis of N(2)-succinylarginine into N(2)-succinylornithine, ammonia and CO(2). This Pseudomonas aeruginosa (strain LESB58) protein is N-succinylarginine dihydrolase.